The following is a 763-amino-acid chain: Transferrin receptor protein 1 (763 aa).

Topologically, residues 1-67 (MMDQARSAFS…KPKRFNGRLC (67 aa)) are cytoplasmic. A mediates interaction with SH3BP4 region spans residues 1-67 (MMDQARSAFS…KPKRFNGRLC (67 aa)). A phosphoserine mark is found at S10 and S19. Y20 carries the phosphotyrosine modification. The short motif at 20-23 (YTRF) is the Endocytosis signal element. T21 carries the post-translational modification Phosphothreonine. Phosphoserine is present on S24. The short motif at 58–61 (KPKR) is the Stop-transfer sequence element. C67 carries the S-palmitoyl cysteine lipid modification. A helical; Signal-anchor for type II membrane protein transmembrane segment spans residues 68–88 (FAAIALVIFFLIGFMSGYLGY). Residues 89–763 (CKRVEQKEEC…GDIWNIDNEF (675 aa)) lie on the Extracellular side of the membrane. The O-linked (GalNAc...) threonine glycan is linked to T104. A PA domain is found at 225-315 (SKPTEVSGKL…GTGDPYTPGF (91 aa)). 2 N-linked (GlcNAc...) asparagine glycosylation sites follow: N253 and N319. Residues 572 to 763 (RLDTYEALTQ…GDIWNIDNEF (192 aa)) are ligand-binding. The Cell attachment site signature appears at 649–651 (RGD). N-linked (GlcNAc...) asparagine glycosylation is found at N725 and N730.

It belongs to the peptidase M28 family. M28B subfamily. Homodimer; disulfide-linked. Binds one transferrin molecule per subunit. Interacts with SH3BP4. Interacts with STEAP3; facilitates TFRC endocytosis in erythroid precursor cells. Post-translationally, stearoylated by ZDHHC6 which inhibits TFRC-mediated activation of the JNK pathway and promotes mitochondrial fragmentation. Stearoylation does not affect iron uptake. In terms of processing, N- and O-glycosylated, phosphorylated and palmitoylated.

The protein resides in the cell membrane. Its subcellular location is the melanosome. Cellular uptake of iron occurs via receptor-mediated endocytosis of ligand-occupied transferrin receptor into specialized endosomes. Endosomal acidification leads to iron release. The apotransferrin-receptor complex is then recycled to the cell surface with a return to neutral pH and the concomitant loss of affinity of apotransferrin for its receptor. Transferrin receptor is necessary for development of erythrocytes and the nervous system. Upon stimulation, positively regulates T and B cell proliferation through iron uptake. Acts as a lipid sensor that regulates mitochondrial fusion by regulating activation of the JNK pathway. When dietary levels of stearate (C18:0) are low, promotes activation of the JNK pathway, resulting in HUWE1-mediated ubiquitination and subsequent degradation of the mitofusin MFN2 and inhibition of mitochondrial fusion. When dietary levels of stearate (C18:0) are high, TFRC stearoylation inhibits activation of the JNK pathway and thus degradation of the mitofusin MFN2. Mediates uptake of NICOL1 into fibroblasts where it may regulate extracellular matrix production. The protein is Transferrin receptor protein 1 (Tfrc) of Mus musculus (Mouse).